A 307-amino-acid polypeptide reads, in one-letter code: tRNA-cytidine(32) 2-sulfurtransferase (307 aa).

The PP-loop motif motif lies at 44–49 (SGGKDS). Positions 119, 122, and 210 each coordinate [4Fe-4S] cluster.

Belongs to the TtcA family. Homodimer. It depends on Mg(2+) as a cofactor. Requires [4Fe-4S] cluster as cofactor.

It is found in the cytoplasm. It catalyses the reaction cytidine(32) in tRNA + S-sulfanyl-L-cysteinyl-[cysteine desulfurase] + AH2 + ATP = 2-thiocytidine(32) in tRNA + L-cysteinyl-[cysteine desulfurase] + A + AMP + diphosphate + H(+). Its pathway is tRNA modification. Functionally, catalyzes the ATP-dependent 2-thiolation of cytidine in position 32 of tRNA, to form 2-thiocytidine (s(2)C32). The sulfur atoms are provided by the cysteine/cysteine desulfurase (IscS) system. The protein is tRNA-cytidine(32) 2-sulfurtransferase of Aliivibrio fischeri (strain ATCC 700601 / ES114) (Vibrio fischeri).